Consider the following 348-residue polypeptide: tRNA N6-adenosine threonylcarbamoyltransferase (348 aa).

Fe cation is bound by residues H115 and H119. Substrate is bound by residues 138–142 (LVSGG), D171, G184, and N276. Fe cation is bound at residue D304.

It belongs to the KAE1 / TsaD family. The cofactor is Fe(2+).

The protein localises to the cytoplasm. It carries out the reaction L-threonylcarbamoyladenylate + adenosine(37) in tRNA = N(6)-L-threonylcarbamoyladenosine(37) in tRNA + AMP + H(+). Its function is as follows. Required for the formation of a threonylcarbamoyl group on adenosine at position 37 (t(6)A37) in tRNAs that read codons beginning with adenine. Is involved in the transfer of the threonylcarbamoyl moiety of threonylcarbamoyl-AMP (TC-AMP) to the N6 group of A37, together with TsaE and TsaB. TsaD likely plays a direct catalytic role in this reaction. In Xylella fastidiosa (strain 9a5c), this protein is tRNA N6-adenosine threonylcarbamoyltransferase.